Reading from the N-terminus, the 217-residue chain is Probable transaldolase (217 aa).

Catalysis depends on Lys-83, which acts as the Schiff-base intermediate with substrate.

Belongs to the transaldolase family. Type 3B subfamily.

The protein localises to the cytoplasm. The catalysed reaction is D-sedoheptulose 7-phosphate + D-glyceraldehyde 3-phosphate = D-erythrose 4-phosphate + beta-D-fructose 6-phosphate. It functions in the pathway carbohydrate degradation; pentose phosphate pathway; D-glyceraldehyde 3-phosphate and beta-D-fructose 6-phosphate from D-ribose 5-phosphate and D-xylulose 5-phosphate (non-oxidative stage): step 2/3. In terms of biological role, transaldolase is important for the balance of metabolites in the pentose-phosphate pathway. This is Probable transaldolase from Clostridium botulinum (strain Hall / ATCC 3502 / NCTC 13319 / Type A).